Consider the following 187-residue polypeptide: UPF0301 protein KPN78578_33170 (187 aa).

The protein belongs to the UPF0301 (AlgH) family.

This Klebsiella pneumoniae subsp. pneumoniae (strain ATCC 700721 / MGH 78578) protein is UPF0301 protein KPN78578_33170.